The sequence spans 345 residues: D-alanine--D-alanine ligase (345 aa).

The ATP-grasp domain maps to 133–340 (KLYAKERGVK…IDYRYIHQIQ (208 aa)). 162–211 (PLIVKPLRLGSSIGVSIAKNRQELDYALDVAFEFDEAALLEPFMQGIKEY) is a binding site for ATP. Mg(2+)-binding residues include D284, E296, and N298.

This sequence belongs to the D-alanine--D-alanine ligase family. It depends on Mg(2+) as a cofactor. Mn(2+) serves as cofactor.

It localises to the cytoplasm. The enzyme catalyses 2 D-alanine + ATP = D-alanyl-D-alanine + ADP + phosphate + H(+). It functions in the pathway cell wall biogenesis; peptidoglycan biosynthesis. Cell wall formation. This chain is D-alanine--D-alanine ligase, found in Wolinella succinogenes (strain ATCC 29543 / DSM 1740 / CCUG 13145 / JCM 31913 / LMG 7466 / NCTC 11488 / FDC 602W) (Vibrio succinogenes).